Reading from the N-terminus, the 62-residue chain is Conorfamide-Tx1 (62 aa).

Residues 1 to 19 (MSGRGFLLLALLLLVTVEA) form the signal peptide. Residues 20–26 (TKVEKNK) constitute a propeptide that is removed on maturation. Tyr46 carries the tyrosine amide modification. Positions 47 to 62 (GRRDMQSPLLSERLRF) are excised as a propeptide.

The protein belongs to the FARP (FMRFamide related peptide) family. Expressed by the venom duct.

Its subcellular location is the secreted. This peptide does not show activity on human and mouse sensory neuron-specific G-protein coupled receptors MRGPRX1. This Conus textile (Cloth-of-gold cone) protein is Conorfamide-Tx1.